The sequence spans 1202 residues: Phospholipid-transporting ATPase 10 (1202 aa).

Over 1–73 (MAGPSRRRRR…STKYTVASFF (73 aa)) the chain is Cytoplasmic. Residues 74 to 95 (PKSLFEQFRRVANFYFLVTGIL) traverse the membrane as a helical segment. Over 96–99 (SLTD) the chain is Extracellular. The chain crosses the membrane as a helical span at residues 100–122 (LSPYGAVSALLPLALVISATMVK). Over 123–305 (EGIEDWRRKQ…SRIERTMDKI (183 aa)) the chain is Cytoplasmic. The helical transmembrane segment at 306 to 327 (IYLMFGLVFLMSFVGSIIFGVE) threads the bilayer. Residues 328–364 (TREDKVKNGRTERWYLKPDDADIFFDPERAPMAAIYH) are Extracellular-facing. Residues 365–382 (FFTATMLYSYFIPISLYV) form a helical membrane-spanning segment. Residues 383 to 920 (SIEIVKVLQS…HGHWCYSRIA (538 aa)) are Cytoplasmic-facing. The 4-aspartylphosphate intermediate role is filled by D430. Mg(2+) contacts are provided by D865 and D869. Residues 921–940 (SMICYFFYKNITFGVTVFLY) traverse the membrane as a helical segment. The Extracellular portion of the chain corresponds to 941 to 954 (EAYTSFSGQPAYND). A helical membrane pass occupies residues 955 to 974 (WFLSLFNVFFSSLPVIALGV). Over 975–1004 (FDQDVSARFCYKFPLLYQEGVQNILFSWKR) the chain is Cytoplasmic. Residues 1005–1027 (IIGWMFNGFISALAIFFLCKESL) form a helical membrane-spanning segment. At 1028-1040 (KHQLFDPDGKTAG) the chain is on the extracellular side. A helical membrane pass occupies residues 1041-1063 (REILGGTMYTCVVWVVNLQMALS). Residues 1064-1069 (ISYFTW) lie on the Cytoplasmic side of the membrane. A helical membrane pass occupies residues 1070 to 1090 (VQHIVIWGSIAFWYIFLMIYG). The Extracellular portion of the chain corresponds to 1091-1107 (AMTPSFSTDAYMVFLEA). A helical membrane pass occupies residues 1108 to 1132 (LAPAPSYWLTTLFVMIFALIPYFVY). Over 1133-1202 (KSVQMRFFPK…DQIYKDLVGV (70 aa)) the chain is Cytoplasmic.

This sequence belongs to the cation transport ATPase (P-type) (TC 3.A.3) family. Type IV subfamily.

The protein resides in the cell membrane. It carries out the reaction ATP + H2O + phospholipidSide 1 = ADP + phosphate + phospholipidSide 2.. Its function is as follows. Involved in transport of phospholipids. The protein is Phospholipid-transporting ATPase 10 of Arabidopsis thaliana (Mouse-ear cress).